The primary structure comprises 308 residues: Very-long-chain enoyl-CoA reductase (308 aa).

Residues 1 to 86 (MKHYEVEIRD…YFRDLGAQIS (86 aa)) lie on the Cytoplasmic side of the membrane. An N6-acetyllysine modification is found at Lys-22. Ser-58 carries the phosphoserine modification. Lys-60 is subject to N6-acetyllysine. The chain crosses the membrane as a helical span at residues 87–106 (WVTVFLTEYAGPLFIYLLFY). Over 107-124 (FRVPFIYGRKYDFTSSRH) the chain is Lumenal. Residues 125–147 (TVVHLACMCHSFHYIKRLLETLF) form a helical membrane-spanning segment. Over 148–158 (VHRFSHGTMPL) the chain is Cytoplasmic. The chain crosses the membrane as a helical span at residues 159–180 (RNIFKNCTYYWGFAAWMAYYIN). The Lumenal portion of the chain corresponds to 181–189 (HPLYTPPTY). The helical transmembrane segment at 190–216 (GVQQVKLALAIFVICQLGNFSIHMALR) threads the bilayer. The Cytoplasmic portion of the chain corresponds to 217–245 (DLRPAGSKTRKIPYPTKNPFTWLFLLVSC). The chain crosses the membrane as a helical span at residues 246–262 (PNYTYEVGSWIGFAIMT). Over 263–264 (QC) the chain is Lumenal. Residues 265–292 (VPVALFSLVGFTQMTIWAKGKHRSYLKE) form a helical membrane-spanning segment. Residues 293–308 (FRDYPPLRMPIIPFLL) are Cytoplasmic-facing.

Belongs to the steroid 5-alpha reductase family. Interacts with ELOVL1 and LASS2. Glycosylated. Expressed at high levels in brain and is also found at lower levels in several other tissues.

It is found in the endoplasmic reticulum membrane. It catalyses the reaction a very-long-chain 2,3-saturated fatty acyl-CoA + NADP(+) = a very-long-chain (2E)-enoyl-CoA + NADPH + H(+). It carries out the reaction octadecanoyl-CoA + NADP(+) = (2E)-octadecenoyl-CoA + NADPH + H(+). The catalysed reaction is (2E,7Z,10Z,13Z,16Z)-docosapentaenoyl-CoA + NADPH + H(+) = (7Z,10Z,13Z,16Z)-docosatetraenoyl-CoA + NADP(+). The enzyme catalyses (2E,7Z,10Z,13Z,16Z,19Z)-docosahexaenoyl-CoA + NADPH + H(+) = (7Z,10Z,13Z,16Z,19Z)-docosapentaenoyl-CoA + NADP(+). It catalyses the reaction (2E,8Z,11Z,14Z)-eicosatetraenoyl-CoA + NADPH + H(+) = (8Z,11Z,14Z)-eicosatrienoyl-CoA + NADP(+). It carries out the reaction (2E)-hexadecenoyl-CoA + NADPH + H(+) = hexadecanoyl-CoA + NADP(+). Its pathway is lipid metabolism; fatty acid biosynthesis. It participates in lipid metabolism; sphingolipid metabolism. Functionally, involved in both the production of very long-chain fatty acids for sphingolipid synthesis and the degradation of the sphingosine moiety in sphingolipids through the sphingosine 1-phosphate metabolic pathway. Catalyzes the last of the four reactions of the long-chain fatty acids elongation cycle. This endoplasmic reticulum-bound enzymatic process, allows the addition of 2 carbons to the chain of long- and very long-chain fatty acids/VLCFAs per cycle. This enzyme reduces the trans-2,3-enoyl-CoA fatty acid intermediate to an acyl-CoA that can be further elongated by entering a new cycle of elongation. Thereby, it participates in the production of VLCFAs of different chain lengths that are involved in multiple biological processes as precursors of membrane lipids and lipid mediators. Catalyzes the saturation step of the sphingosine 1-phosphate metabolic pathway, the conversion of trans-2-hexadecenoyl-CoA to palmitoyl-CoA. The polypeptide is Very-long-chain enoyl-CoA reductase (Tecr) (Rattus norvegicus (Rat)).